We begin with the raw amino-acid sequence, 468 residues long: ATP synthase subunit beta (468 aa).

155 to 162 (GGAGVGKT) serves as a coordination point for ATP.

This sequence belongs to the ATPase alpha/beta chains family. As to quaternary structure, F-type ATPases have 2 components, CF(1) - the catalytic core - and CF(0) - the membrane proton channel. CF(1) has five subunits: alpha(3), beta(3), gamma(1), delta(1), epsilon(1). CF(0) has three main subunits: a(1), b(2) and c(9-12). The alpha and beta chains form an alternating ring which encloses part of the gamma chain. CF(1) is attached to CF(0) by a central stalk formed by the gamma and epsilon chains, while a peripheral stalk is formed by the delta and b chains.

The protein resides in the cell membrane. The enzyme catalyses ATP + H2O + 4 H(+)(in) = ADP + phosphate + 5 H(+)(out). In terms of biological role, produces ATP from ADP in the presence of a proton gradient across the membrane. The catalytic sites are hosted primarily by the beta subunits. The protein is ATP synthase subunit beta of Enterococcus hirae (strain ATCC 9790 / DSM 20160 / JCM 8729 / LMG 6399 / NBRC 3181 / NCIMB 6459 / NCDO 1258 / NCTC 12367 / WDCM 00089 / R).